The sequence spans 87 residues: Large ribosomal subunit protein bL27 (87 aa).

Residues methionine 1–leucine 21 form a disordered region.

It belongs to the bacterial ribosomal protein bL27 family.

This chain is Large ribosomal subunit protein bL27, found in Nautilia profundicola (strain ATCC BAA-1463 / DSM 18972 / AmH).